The primary structure comprises 452 residues: Tripartite motif-containing protein 49 (452 aa).

The RING-type zinc finger occupies 15-56; that stretch reads CPLCMNYFIDPVTIDCGHSFCRPCFYLNWQDIPFLVQCSECT. The segment at 88-129 adopts a B box-type zinc-finger fold; the sequence is SEEQMCGTHRETKKIFCEVDRSLLCLLCSSSQEHRYHRHRPI. Zn(2+) is bound by residues C93, H96, C115, and H121. The B30.2/SPRY domain occupies 269–452; it reads ELSAGPITGL…LRPIFCCIHF (184 aa).

It belongs to the TRIM/RBCC family. As to expression, preferentially expressed in testis.

The sequence is that of Tripartite motif-containing protein 49 (TRIM49) from Homo sapiens (Human).